The sequence spans 228 residues: Ribonuclease HII (228 aa).

The RNase H type-2 domain occupies 11–202; the sequence is GPVAGVDEAG…VVAAAQLHGM (192 aa). Residues Asp-17, Glu-18, and Asp-111 each coordinate a divalent metal cation.

The protein belongs to the RNase HII family. The cofactor is Mn(2+). Requires Mg(2+) as cofactor.

The protein resides in the cytoplasm. It carries out the reaction Endonucleolytic cleavage to 5'-phosphomonoester.. In terms of biological role, endonuclease that specifically degrades the RNA of RNA-DNA hybrids. The chain is Ribonuclease HII from Saccharopolyspora erythraea (strain ATCC 11635 / DSM 40517 / JCM 4748 / NBRC 13426 / NCIMB 8594 / NRRL 2338).